A 1068-amino-acid polypeptide reads, in one-letter code: Sucrose-phosphate synthase (1068 aa).

2 disordered regions span residues 18-47 (HTSS…GAHM) and 118-139 (KEQE…SEGE). The segment covering 23–32 (GAGGGGGGGD) has biased composition (gly residues). Residues 118–128 (KEQEQVRREAT) are compositionally biased toward basic and acidic residues.

It belongs to the glycosyltransferase 1 family. Homodimer or homotetramer.

It catalyses the reaction beta-D-fructose 6-phosphate + UDP-alpha-D-glucose = sucrose 6(F)-phosphate + UDP + H(+). It participates in glycan biosynthesis; sucrose biosynthesis; sucrose from D-fructose 6-phosphate and UDP-alpha-D-glucose: step 1/2. Activity is regulated by phosphorylation and moderated by concentration of metabolites and light. Functionally, plays a role in photosynthetic sucrose synthesis by catalyzing the rate-limiting step of sucrose biosynthesis from UDP-glucose and fructose- 6-phosphate. Involved in the regulation of carbon partitioning in the leaves of plants. May regulate the synthesis of sucrose and therefore play a major role as a limiting factor in the export of photoassimilates out of the leaf. Plays a role for sucrose availability that is essential for plant growth and fiber elongation. The sequence is that of Sucrose-phosphate synthase from Zea mays (Maize).